We begin with the raw amino-acid sequence, 76 residues long: Paralithocin 3 (76 aa).

Positions Met1–Ala23 are cleaved as a signal peptide. Cystine bridges form between Cys31-Cys62, Cys40-Cys58, Cys44-Cys56, and Cys49-Cys59. A Proline amide; partial modification is found at Pro74.

The protein belongs to the paralithocin family. The amidated form is probably the active form.

In terms of biological role, has antibacterial activity, mainly against marine Gram-positive bacteria like C.maltaromaticum (MIC=25 uM), C.mobile (MIC=12.5 uM), C.divergens (MIC=25 uM) and C.funditum (MIC=12.5 uM) but also against C.glutamicum (MIC=12.5 uM). Has very little or no activity against Gram-negative bacteria. This is Paralithocin 3 from Paralithodes camtschaticus (Red king crab).